A 370-amino-acid polypeptide reads, in one-letter code: MVSQNVVVSDAKTGIITVSTVSNSSVFTPTAQKPPTAPGYISVSKKKLLKNLEINGADQSQRLNSWVDSMRASSPTHLKSLSSFSSEEEHNSWIKRHPSALNMFERIIEEARGKQIVMFLDYDGTLSPIVDDPDRAFMTSKMRRTVKKMAKCFPTSIVTGRCIDKVYSFVKLAELYYAGSHGMDIKGPTKGFSRYNKDKPSVLYQPAGDFLPMIDEVYKQLVEKTKSTPGAKVENNKFCLSVHFRCVDEKKWSELASKVRSVVKNYPTLKLSQGRKVFEIRPIIKWNKGKALEFLLESLGFENCNDVFPIYIGDDKTDEDAFKLLRGRGQGFGILVSKFPKDTSASYSLQDPPEVMNFLGRLVEWKQMQQ.

The protein belongs to the trehalose phosphatase family. Requires a divalent metal cation as cofactor.

The enzyme catalyses alpha,alpha-trehalose 6-phosphate + H2O = alpha,alpha-trehalose + phosphate. Its pathway is glycan biosynthesis; trehalose biosynthesis. Removes the phosphate from trehalose 6-phosphate to produce free trehalose. Trehalose accumulation in plant may improve abiotic stress tolerance. In Arabidopsis thaliana (Mouse-ear cress), this protein is Probable trehalose-phosphate phosphatase J (TPPJ).